The following is a 61-amino-acid chain: Alpha-conotoxin-like Lp1.6a (61 aa).

The first 21 residues, 1–21 (MGMRMMFIIFLFVVLATTVVS), serve as a signal peptide directing secretion. Residues 22–44 (FTSGRASDGRNAPANNKVSDLIR) constitute a propeptide that is removed on maturation. Pyrrolidone carboxylic acid is present on Q45. 2 disulfide bridges follow: C47–C53 and C48–C60. The residue at position 60 (C60) is a Cysteine amide.

The protein belongs to the conotoxin A superfamily. In terms of tissue distribution, expressed by the venom duct.

It localises to the secreted. Its function is as follows. Alpha-conotoxins act on postsynaptic membranes, they bind to the nicotinic acetylcholine receptors (nAChR) and thus inhibit them. The chain is Alpha-conotoxin-like Lp1.6a from Conus leopardus (Leopard cone).